The primary structure comprises 40 residues: Mu-thomitoxin-Hme1b (40 aa).

3 disulfide bridges follow: Cys2–Cys18, Cys9–Cys22, and Cys17–Cys33.

Belongs to the neurotoxin 19 (CSTX) family. Post-translationally, contains 3 disulfide bonds. Expressed by the venom gland.

The protein resides in the secreted. In terms of biological role, blocks the Nav1.2/SCN2A, Nav1.4/SCN4A, Nav1.5/SCN5A and Nav1.6/SCN8A sodium channels. Shows a slight preference for the Nav1.2 and Nav1.4 channels. Reduces the peak amplitude of the sodium current and negatively shifts the steady-state inactivation process. Does not shift the threshold potential of activation or the voltage corresponding to maximal current. Does not change the reversal potential of the sodium current. May act on site 1 of the receptor. This is Mu-thomitoxin-Hme1b from Heriaeus mellotteei (Crab spider).